Here is a 99-residue protein sequence, read N- to C-terminus: UPF0473 protein LEUM_0559 (99 aa).

Belongs to the UPF0473 family.

The sequence is that of UPF0473 protein LEUM_0559 from Leuconostoc mesenteroides subsp. mesenteroides (strain ATCC 8293 / DSM 20343 / BCRC 11652 / CCM 1803 / JCM 6124 / NCDO 523 / NBRC 100496 / NCIMB 8023 / NCTC 12954 / NRRL B-1118 / 37Y).